The primary structure comprises 206 residues: Ras-related protein RABG3d (206 aa).

15-22 contacts GTP; it reads GDSGVGKT. The short motif at 37–45 is the Effector region element; it reads YKATIGADF. Residues 63 to 67, 125 to 128, and 158 to 159 contribute to the GTP site; these read DTAGQ, NKTD, and SA. Residues Cys204 and Cys206 are each lipidated (S-geranylgeranyl cysteine). A Cysteine methyl ester modification is found at Cys206.

Belongs to the small GTPase superfamily. Rab family.

It localises to the cell membrane. Functionally, intracellular vesicle trafficking and protein transport. The sequence is that of Ras-related protein RABG3d (RABG3D) from Arabidopsis thaliana (Mouse-ear cress).